Reading from the N-terminus, the 20-residue chain is Equinatoxin-3 (20 aa).

The tract at residues 3–12 is plays an important role in the hemolytic activity; the sequence is AVAGAIIKGA. The interval 11-20 is N-terminal region; the sequence is GAALTFNVLQ.

The protein belongs to the actinoporin family. Sea anemone subfamily. In terms of assembly, octamer or nonamer in membranes. Monomer in the soluble state.

It is found in the secreted. Its subcellular location is the nematocyst. It localises to the target cell membrane. Functionally, pore-forming protein that forms cations-selective hydrophilic pores of around 1 nm and causes cardiac stimulation and cytolysis. Pore formation is a multi-step process that involves specific recognition of membrane sphingomyelin (but neither cholesterol nor phosphatidylcholine) using aromatic rich region and adjacent phosphocholine (POC) binding site, firm binding to the membrane (mainly driven by hydrophobic interactions) accompanied by the transfer of the N-terminal region to the lipid-water interface and finally pore formation after oligomerization of monomers. Cytolytic effects include red blood cells hemolysis, platelet aggregation and lysis, cytotoxic and cytostatic effects on fibroblasts. Lethality in mammals has been ascribed to severe vasospasm of coronary vessels, cardiac arrhythmia, and inotropic effects. The chain is Equinatoxin-3 from Actinia equina (Beadlet anemone).